The primary structure comprises 219 residues: MSVPSRKIRLIMELRQNGVSATPVLAAIERVPRDAFVSAPFSDQAYENTALPIGCGQTISQPLVVGLMTQALDLNDRHKVLEIGTGSGYQTAVLARLCRRVYTIERHGALLREAEARLTALGLHRTVVTREGDGGRGWPEQAPFERILVTAAALDIPKVLVAQLAIGGVMVLPVGKESGAQEVVRVRRTAEDALVTERLFPVRFVPLVDGLPPRDAPGA.

The active site involves serine 60.

Belongs to the methyltransferase superfamily. L-isoaspartyl/D-aspartyl protein methyltransferase family.

It is found in the cytoplasm. The catalysed reaction is [protein]-L-isoaspartate + S-adenosyl-L-methionine = [protein]-L-isoaspartate alpha-methyl ester + S-adenosyl-L-homocysteine. Catalyzes the methyl esterification of L-isoaspartyl residues in peptides and proteins that result from spontaneous decomposition of normal L-aspartyl and L-asparaginyl residues. It plays a role in the repair and/or degradation of damaged proteins. The chain is Protein-L-isoaspartate O-methyltransferase from Rhodospirillum rubrum (strain ATCC 11170 / ATH 1.1.1 / DSM 467 / LMG 4362 / NCIMB 8255 / S1).